Consider the following 329-residue polypeptide: Mitochondrial glycine transporter (329 aa).

3 Solcar repeats span residues 19-103 (SKTT…LRQP), 130-214 (LSNW…LKRH), and 232-316 (SSSS…LILR). Helical transmembrane passes span 25-50 (FAAG…TRVQ), 78-104 (GTLP…RQPL), 136-161 (LGTG…VRYE), 189-212 (GFGA…EQLK), 236-262 (INFI…KTRL), and 291-309 (GLGL…AWTV).

It belongs to the mitochondrial carrier (TC 2.A.29) family. SLC25A38 subfamily.

It localises to the mitochondrion inner membrane. The enzyme catalyses glycine(in) = glycine(out). Its function is as follows. Mitochondrial glycine transporter that imports glycine into the mitochondrial matrix. Plays an important role in providing glycine for the first enzymatic step in heme biosynthesis, the condensation of glycine with succinyl-CoA to produce 5-aminolevulinate (ALA) in the mitochondrial matrix. This is Mitochondrial glycine transporter from Aspergillus terreus (strain NIH 2624 / FGSC A1156).